Consider the following 332-residue polypeptide: GDP-mannose transporter 2 (332 aa).

The Cytoplasmic portion of the chain corresponds to 1-12 (MSSLKVSQQDKK). Residues 13–33 (WVNSGSVAILAYCASSILMTI) traverse the membrane as a helical segment. Residues 34-47 (TNKVVMSDRTFNMN) are Lumenal-facing. Residues 48–68 (FLLLFIQSLVCVITLLVLKVL) form a helical membrane-spanning segment. Residues 69-84 (GSVNFRSFNKTDARNW) lie on the Cytoplasmic side of the membrane. A helical membrane pass occupies residues 85–105 (FPISICLVLMIFTSSKSLQYL). Over 106 to 108 (SVP) the chain is Lumenal. The helical transmembrane segment at 109-129 (VYTIFKNLTIIVIAYGEVLFF) threads the bilayer. Topologically, residues 130-131 (GS) are cytoplasmic. A helical membrane pass occupies residues 132–152 (SVGNMELGSFALMIVSSLIAA). Topologically, residues 153-174 (HGDYLHSVERLKKMLGPNVSFS) are lumenal. The N-linked (GlcNAc...) asparagine glycan is linked to N170. The helical transmembrane segment at 175–195 (FIVNIGYFWIAANCFASALFV) threads the bilayer. The Cytoplasmic segment spans residues 196–211 (LLMRKRIQVTNFKDFD). Residues 212 to 232 (TMFYNNVLSLPLLLLGSYLFE) traverse the membrane as a helical segment. The Lumenal segment spans residues 233-248 (DWSQENLLPHVDIDNL). N247 carries N-linked (GlcNAc...) asparagine glycosylation. A helical membrane pass occupies residues 249 to 269 (STMIISGLASVAISYCSGWCV). The Cytoplasmic segment spans residues 270-274 (RVTSS). The chain crosses the membrane as a helical span at residues 275–295 (TTYSMVGALNKLPIALTGFLF). The Lumenal segment spans residues 296–300 (NDAAR). A helical transmembrane segment spans residues 301–321 (NLSSAASILLGFASGIIYAVA). Residues 322–332 (KQKKLQNSEKI) lie on the Cytoplasmic side of the membrane.

This sequence belongs to the TPT transporter family. SLC35D subfamily. As to quaternary structure, homooligomer.

The protein localises to the golgi apparatus membrane. It is found in the cytoplasmic vesicle membrane. Its subcellular location is the endoplasmic reticulum membrane. In terms of biological role, involved in the import of GDP-mannose from the cytoplasm into the Golgi lumen. This is GDP-mannose transporter 2 (VRG4-2) from Vanderwaltozyma polyspora (strain ATCC 22028 / DSM 70294 / BCRC 21397 / CBS 2163 / NBRC 10782 / NRRL Y-8283 / UCD 57-17) (Kluyveromyces polysporus).